Consider the following 320-residue polypeptide: Acetyl-coenzyme A carboxylase carboxyl transferase subunit alpha (320 aa).

The 254-residue stretch at 42–295 (IEEKALAALT…GDAIAKSFAD (254 aa)) folds into the CoA carboxyltransferase C-terminal domain.

The protein belongs to the AccA family. As to quaternary structure, acetyl-CoA carboxylase is a heterohexamer composed of biotin carboxyl carrier protein (AccB), biotin carboxylase (AccC) and two subunits each of ACCase subunit alpha (AccA) and ACCase subunit beta (AccD).

It localises to the cytoplasm. The catalysed reaction is N(6)-carboxybiotinyl-L-lysyl-[protein] + acetyl-CoA = N(6)-biotinyl-L-lysyl-[protein] + malonyl-CoA. Its pathway is lipid metabolism; malonyl-CoA biosynthesis; malonyl-CoA from acetyl-CoA: step 1/1. Functionally, component of the acetyl coenzyme A carboxylase (ACC) complex. First, biotin carboxylase catalyzes the carboxylation of biotin on its carrier protein (BCCP) and then the CO(2) group is transferred by the carboxyltransferase to acetyl-CoA to form malonyl-CoA. The protein is Acetyl-coenzyme A carboxylase carboxyl transferase subunit alpha of Rhodopseudomonas palustris (strain BisA53).